Consider the following 184-residue polypeptide: ATP-dependent protease subunit HslV (184 aa).

The active site involves Thr-12. Positions 166, 169, and 172 each coordinate Na(+).

It belongs to the peptidase T1B family. HslV subfamily. A double ring-shaped homohexamer of HslV is capped on each side by a ring-shaped HslU homohexamer. The assembly of the HslU/HslV complex is dependent on binding of ATP.

It is found in the cytoplasm. It carries out the reaction ATP-dependent cleavage of peptide bonds with broad specificity.. With respect to regulation, allosterically activated by HslU binding. Its function is as follows. Protease subunit of a proteasome-like degradation complex believed to be a general protein degrading machinery. This Nitrobacter hamburgensis (strain DSM 10229 / NCIMB 13809 / X14) protein is ATP-dependent protease subunit HslV.